A 395-amino-acid chain; its full sequence is MEKKTVYNITNSIAISEEEAVNCNIPEVNKAEINLSQLKRNFDIIQGFLKPNTKFMAVLKGDAYGHGIRPIAKELINLKCDVFGVVRLIEAFTLRKAGIKTPIMLLAPISPSQAAWVIRYNIIPMVDSEEIVEALDQSASQNDTIVKLHVKINTGLNRYGVNPENAVKFIREIHEKYLHVQVDGVYTHFQDPDYNPDFTHKQIECFNNIIFQLQKQKLRPRIIHAANSTGIIRYPEAHYDMVRCGTLLFGLEHEQGQRNMPKGIKTLMELKGRIMKVRTIRAGEAGGYGSTFVAKKDSKVAIIAFGYGDGISRGWKEVLVAGKRVPVVNYFMDGLMVDISNIDETVKELDEAVIVGNQGDESITWLEACKSLGSYVDEQIQCITERVPKKYFYEK.

The Proton acceptor; specific for D-alanine role is filled by Lys60. Lys60 bears the N6-(pyridoxal phosphate)lysine mark. A substrate-binding site is contributed by Arg158. Tyr288 serves as the catalytic Proton acceptor; specific for L-alanine. Met332 is a substrate binding site.

It belongs to the alanine racemase family. Pyridoxal 5'-phosphate serves as cofactor.

The catalysed reaction is L-alanine = D-alanine. Its pathway is amino-acid biosynthesis; D-alanine biosynthesis; D-alanine from L-alanine: step 1/1. Functionally, catalyzes the interconversion of L-alanine and D-alanine. May also act on other amino acids. The protein is Alanine racemase 2 (alr2) of Clostridium acetobutylicum (strain ATCC 824 / DSM 792 / JCM 1419 / IAM 19013 / LMG 5710 / NBRC 13948 / NRRL B-527 / VKM B-1787 / 2291 / W).